The sequence spans 100 residues: MELTPREKDKLLLFTAALVAERRLARGLKLNYPESVALISAFIMEGARDGKSVASLMEEGRHVLTRKQVMEGVPEMIPDIQVEATFPDGSKLVTVHNPII.

Belongs to the urease gamma subunit family. Heterotrimer of UreA (gamma), UreB (beta) and UreC (alpha) subunits. Three heterotrimers associate to form the active enzyme.

It is found in the cytoplasm. The enzyme catalyses urea + 2 H2O + H(+) = hydrogencarbonate + 2 NH4(+). It functions in the pathway nitrogen metabolism; urea degradation; CO(2) and NH(3) from urea (urease route): step 1/1. The sequence is that of Urease subunit gamma from Klebsiella pneumoniae.